The chain runs to 320 residues: ATP-dependent 6-phosphofructokinase (320 aa).

Gly12 is a binding site for ATP. Residues 22–26 (RGVVR) and 55–60 (RYSVSD) each bind ADP. Residues 73 to 74 (RF) and 103 to 106 (GDGS) contribute to the ATP site. Asp104 serves as a coordination point for Mg(2+). Substrate is bound at residue 126–128 (TID). The active-site Proton acceptor is the Asp128. Arg155 serves as a coordination point for ADP. Residues Arg163 and 170–172 (MGR) contribute to the substrate site. ADP is bound by residues 186–188 (GCE), Lys212, and 214–216 (KKH). Substrate is bound by residues Glu223, Arg244, and 250-253 (HIQR).

The protein belongs to the phosphofructokinase type A (PFKA) family. ATP-dependent PFK group I subfamily. Prokaryotic clade 'B1' sub-subfamily. In terms of assembly, homotetramer. Requires Mg(2+) as cofactor.

Its subcellular location is the cytoplasm. It catalyses the reaction beta-D-fructose 6-phosphate + ATP = beta-D-fructose 1,6-bisphosphate + ADP + H(+). It functions in the pathway carbohydrate degradation; glycolysis; D-glyceraldehyde 3-phosphate and glycerone phosphate from D-glucose: step 3/4. With respect to regulation, allosterically activated by ADP and other diphosphonucleosides, and allosterically inhibited by phosphoenolpyruvate. Catalyzes the phosphorylation of D-fructose 6-phosphate to fructose 1,6-bisphosphate by ATP, the first committing step of glycolysis. This chain is ATP-dependent 6-phosphofructokinase, found in Klebsiella pneumoniae (strain 342).